Here is a 128-residue protein sequence, read N- to C-terminus: Large ribosomal subunit protein mL51 (128 aa).

The N-terminal 31 residues, 1-31 (MAGSLSWVAGRRLWGLVPLACRSFFLGVPRL), are a transit peptide targeting the mitochondrion.

The protein belongs to the mitochondrion-specific ribosomal protein mL51 family. As to quaternary structure, component of the mitochondrial ribosome large subunit (39S) which comprises a 16S rRNA and about 50 distinct proteins. Interacts with OXA1L.

Its subcellular location is the mitochondrion. This is Large ribosomal subunit protein mL51 (MRPL51) from Bos taurus (Bovine).